The chain runs to 219 residues: Ribose-5-phosphate isomerase A (219 aa).

Substrate is bound by residues 28–31 (SGST), 81–84 (DGAD), and 94–97 (KGGG). Catalysis depends on glutamate 103, which acts as the Proton acceptor. Residue lysine 121 coordinates substrate.

The protein belongs to the ribose 5-phosphate isomerase family. In terms of assembly, homodimer.

The catalysed reaction is aldehydo-D-ribose 5-phosphate = D-ribulose 5-phosphate. The protein operates within carbohydrate degradation; pentose phosphate pathway; D-ribose 5-phosphate from D-ribulose 5-phosphate (non-oxidative stage): step 1/1. Functionally, catalyzes the reversible conversion of ribose-5-phosphate to ribulose 5-phosphate. The polypeptide is Ribose-5-phosphate isomerase A (Haemophilus influenzae (strain PittGG)).